Reading from the N-terminus, the 393-residue chain is BEN domain-containing protein 5 (393 aa).

The stretch at 169–212 forms a coiled coil; the sequence is RVLYEELLRSYQQQQQEMKHIQHELERTRKQLVQQAKKLKDYGS. Residues 274–380 form the BEN domain; the sequence is GSGVWVNEEK…EKIMDINKSC (107 aa).

Functionally, may act as a transcriptional repressor. The protein is BEN domain-containing protein 5 (bend5) of Xenopus laevis (African clawed frog).